Consider the following 296-residue polypeptide: (3R)-3-[(carboxymethyl)amino]fatty acid oxygenase/decarboxylase (296 aa).

The (3R)-3-[(carboxymethyl)amino]butanoate site is built by Tyr66, Tyr71, and Gly98. (3R)-3-{[carboxy(hydroxy)methyl]amino}butanoate contacts are provided by Tyr66, Tyr71, and Gly98. Fe(2+)-binding residues include His102 and Asp104. Positions 105 and 163 each coordinate (3R)-3-[(carboxymethyl)amino]butanoate. Residues Tyr105 and Lys163 each contribute to the (3R)-3-{[carboxy(hydroxy)methyl]amino}butanoate site. His265 contributes to the Fe(2+) binding site. Residue His269 participates in 2-oxoglutarate binding. A (3R)-3-[(carboxymethyl)amino]butanoate-binding site is contributed by Arg280. Arg280 is a binding site for (3R)-3-{[carboxy(hydroxy)methyl]amino}butanoate.

This sequence belongs to the TfdA dioxygenase family. It depends on Fe(2+) as a cofactor.

The catalysed reaction is a (3R)-3-[(carboxymethyl)amino]fatty acid + 2 2-oxoglutarate + 2 O2 = a (3R)-3-isocyanyl-fatty acid + 2 succinate + 3 CO2 + 2 H2O. It carries out the reaction a (3R)-3-[(carboxymethyl)amino]fatty acid + 2-oxoglutarate + O2 = a (3R)-3-{[carboxy(hydroxy)methyl]amino}fatty acid + succinate + CO2. It catalyses the reaction a (3R)-3-{[carboxy(hydroxy)methyl]amino}fatty acid + 2-oxoglutarate + O2 = a (3R)-3-isocyanyl-fatty acid + succinate + 2 CO2 + 2 H2O. The enzyme catalyses (3R)-3-[(carboxymethyl)amino]butanoate + 2 2-oxoglutarate + 2 O2 = (3R)-3-isocyanylbutanoate + 2 succinate + 3 CO2 + 2 H2O. The catalysed reaction is (3R)-3-[(carboxymethyl)amino]butanoate + 2-oxoglutarate + O2 = (3R)-3-{[carboxy(hydroxy)methyl]amino}butanoate + succinate + CO2. It carries out the reaction (3R)-3-{[carboxy(hydroxy)methyl]amino}butanoate + 2-oxoglutarate + O2 = (3R)-3-isocyanylbutanoate + succinate + 2 CO2 + 2 H2O. In terms of biological role, involved in the biosynthesis of a unique class of isonitrile lipopeptides (INLPs). Catalyzes the conversion of (3R)-3-[(carboxymethyl)amino]fatty acids such as (3R)-3-[(carboxymethyl)amino]butanoate (CABA) to (3R)-3-isocyanylbutanoate (INBA) through an oxidative decarboxylation mechanism, thereby generating the isonitrile group of INLPs. The polypeptide is (3R)-3-[(carboxymethyl)amino]fatty acid oxygenase/decarboxylase (Streptomyces coeruleorubidus).